The following is a 153-amino-acid chain: Large ribosomal subunit protein bL9 (153 aa).

Belongs to the bacterial ribosomal protein bL9 family.

In terms of biological role, binds to the 23S rRNA. The polypeptide is Large ribosomal subunit protein bL9 (Gloeobacter violaceus (strain ATCC 29082 / PCC 7421)).